A 307-amino-acid chain; its full sequence is Trehalose transport system permease protein SugA (307 aa).

6 helical membrane passes run 25 to 45, 89 to 109, 123 to 143, 168 to 188, 217 to 237, and 272 to 292; these read LAFM…AYPI, LAIT…LALV, AVLI…YYAW, LGIV…LLLL, ILPM…LDAF, and LGSA…FIFI. One can recognise an ABC transmembrane type-1 domain in the interval 85 to 291; that stretch reads LAVTLAITAV…GCVAVIAFIF (207 aa).

This sequence belongs to the binding-protein-dependent transport system permease family. The complex is composed of two ATP-binding proteins (SugC), two transmembrane proteins (Suga and SugB) and a solute-binding protein (LpqY).

The protein resides in the cell inner membrane. Its function is as follows. Part of the ABC transporter complex LpqY-SugA-SugB-SugC, which is highly specific for uptake of trehalose. Involved in the recycling of extracellular trehalose released from trehalose-containing molecules synthesized by M.tuberculosis. Trehalose uptake is essential for virulence. Probably responsible for the translocation of the substrate across the membrane. The sequence is that of Trehalose transport system permease protein SugA (sugA) from Mycobacterium tuberculosis (strain CDC 1551 / Oshkosh).